The sequence spans 219 residues: Izumo sperm-egg fusion protein 4 (219 aa).

A signal peptide spans Met-1–Ala-15. Asn-206 carries an N-linked (GlcNAc...) asparagine glycan.

The protein belongs to the Izumo family.

Its subcellular location is the secreted. The chain is Izumo sperm-egg fusion protein 4 (IZUMO4) from Macaca fascicularis (Crab-eating macaque).